The following is a 174-amino-acid chain: Neuromedin-U (174 aa).

Residues 1–34 (MLRTESCRPRSPAGQVAAASPLLLLLLLLAWCAG) form the signal peptide. A propeptide spanning residues 35–103 (ACRGAPILPQ…EQDEKDNTKR (69 aa)) is cleaved from the precursor. The residue at position 139 (Met-139) is a Methionine sulfoxide; partial. Asparagine amide is present on Asn-166. A propeptide spanning residues 170–174 (SAGFI) is cleaved from the precursor.

The protein belongs to the NmU family. Expressed throughout the enteric nervous system with highest levels being found in the jejunum.

Its subcellular location is the secreted. Its function is as follows. Ligand for receptors NMUR1 and NMUR2. Stimulates muscle contractions of specific regions of the gastrointestinal tract. In humans, NmU stimulates contractions of the ileum and urinary bladder. Does not function as a ligand for either NMUR1 or NMUR2. Indirectly induces prolactin release although its potency is much lower than that of neuromedin precursor-related peptide 36. In terms of biological role, does not function as a ligand for either NMUR1 or NMUR2. Indirectly induces prolactin release from lactotroph cells in the pituitary gland, probably via the hypothalamic dopaminergic system. The protein is Neuromedin-U (NMU) of Homo sapiens (Human).